We begin with the raw amino-acid sequence, 273 residues long: 5-deoxy-glucuronate isomerase (273 aa).

This sequence belongs to the isomerase IolB family.

The catalysed reaction is 5-deoxy-D-glucuronate = 5-dehydro-2-deoxy-D-gluconate. Its pathway is polyol metabolism; myo-inositol degradation into acetyl-CoA; acetyl-CoA from myo-inositol: step 4/7. Involved in the isomerization of 5-deoxy-glucuronate (5DG) to 5-dehydro-2-deoxy-D-gluconate (DKG or 2-deoxy-5-keto-D-gluconate). The polypeptide is 5-deoxy-glucuronate isomerase (Listeria monocytogenes serotype 4b (strain CLIP80459)).